The primary structure comprises 55 residues: Metallothionein-3 (55 aa).

Belongs to the metallothionein superfamily. Type 11 family.

In Yarrowia lipolytica (strain CLIB 122 / E 150) (Yeast), this protein is Metallothionein-3 (MTP3).